A 94-amino-acid chain; its full sequence is MSDESGRRNLRMPNDDEVFAVVKRHDGGNHVTLQCEDGKERMGRIPGRMKYRTWINEGDVVLAEPWDWQDEKANVEWRYSDQDADQLREEGHIE.

Residues 6-80 enclose the S1-like domain; the sequence is GRRNLRMPND…EKANVEWRYS (75 aa).

The protein belongs to the eIF-1A family.

Functionally, seems to be required for maximal rate of protein biosynthesis. Enhances ribosome dissociation into subunits and stabilizes the binding of the initiator Met-tRNA(I) to 40 S ribosomal subunits. The protein is Translation initiation factor 1A 2 (eIF1A2) of Halobacterium salinarum (strain ATCC 700922 / JCM 11081 / NRC-1) (Halobacterium halobium).